The following is a 127-amino-acid chain: Large ribosomal subunit protein bL12c (127 aa).

Residues 104-127 are disordered; it reads GVAKDAAEEAKKQIEDAGGKASLK. Over residues 105-121 the composition is skewed to basic and acidic residues; the sequence is VAKDAAEEAKKQIEDAG.

This sequence belongs to the bacterial ribosomal protein bL12 family. In terms of assembly, homodimer. Part of the ribosomal stalk of the 50S ribosomal subunit. Forms a multimeric L10(L12)X complex, where L10 forms an elongated spine to which 2 to 4 L12 dimers bind in a sequential fashion. Binds GTP-bound translation factors.

The protein localises to the plastid. It localises to the chloroplast. Functionally, forms part of the ribosomal stalk which helps the ribosome interact with GTP-bound translation factors. Is thus essential for accurate translation. The protein is Large ribosomal subunit protein bL12c of Trieres chinensis (Marine centric diatom).